The following is a 274-amino-acid chain: Nitrogenase iron protein (274 aa).

8-15 (GKGGIGKS) serves as a coordination point for ATP. Cys-94 contacts [4Fe-4S] cluster. Residue Arg-97 is modified to ADP-ribosylarginine; by dinitrogenase reductase ADP-ribosyltransferase. Cys-131 is a binding site for [4Fe-4S] cluster.

Belongs to the NifH/BchL/ChlL family. Homodimer. [4Fe-4S] cluster is required as a cofactor. In terms of processing, the reversible ADP-ribosylation of Arg-97 inactivates the nitrogenase reductase and regulates nitrogenase activity.

It carries out the reaction N2 + 8 reduced [2Fe-2S]-[ferredoxin] + 16 ATP + 16 H2O = H2 + 8 oxidized [2Fe-2S]-[ferredoxin] + 2 NH4(+) + 16 ADP + 16 phosphate + 6 H(+). Its function is as follows. The key enzymatic reactions in nitrogen fixation are catalyzed by the nitrogenase complex, which has 2 components: the iron protein and the molybdenum-iron protein. The protein is Nitrogenase iron protein of Chlorobium phaeovibrioides (strain DSM 265 / 1930) (Prosthecochloris vibrioformis (strain DSM 265)).